We begin with the raw amino-acid sequence, 172 residues long: 3-hydroxydecanoyl-[acyl-carrier-protein] dehydratase (172 aa).

Residue His-71 is part of the active site.

Belongs to the thioester dehydratase family. FabA subfamily. Homodimer.

It localises to the cytoplasm. It carries out the reaction a (3R)-hydroxyacyl-[ACP] = a (2E)-enoyl-[ACP] + H2O. The catalysed reaction is (3R)-hydroxydecanoyl-[ACP] = (2E)-decenoyl-[ACP] + H2O. The enzyme catalyses (2E)-decenoyl-[ACP] = (3Z)-decenoyl-[ACP]. Its pathway is lipid metabolism; fatty acid biosynthesis. Its function is as follows. Necessary for the introduction of cis unsaturation into fatty acids. Catalyzes the dehydration of (3R)-3-hydroxydecanoyl-ACP to E-(2)-decenoyl-ACP and then its isomerization to Z-(3)-decenoyl-ACP. Can catalyze the dehydratase reaction for beta-hydroxyacyl-ACPs with saturated chain lengths up to 16:0, being most active on intermediate chain length. This chain is 3-hydroxydecanoyl-[acyl-carrier-protein] dehydratase, found in Erwinia tasmaniensis (strain DSM 17950 / CFBP 7177 / CIP 109463 / NCPPB 4357 / Et1/99).